The chain runs to 267 residues: uncharacterized protein (267 aa).

Positions 72–267 are disordered; sequence LTENNNNNNT…EEKKKKKKKK (196 aa). Low complexity predominate over residues 122 to 145; it reads DSVSSSTTTTIITNNKKINNNNNN. The span at 159 to 175 shows a compositional bias: basic and acidic residues; it reads ENEKSVQKSKKEKESPK. The span at 194–218 shows a compositional bias: low complexity; sequence SESSSSSSSSSSSESSSSESESSSS.

This is an uncharacterized protein from Dictyostelium discoideum (Social amoeba).